Consider the following 373-residue polypeptide: MGKPVDDLLNSLMNLLDSETPSGGGCHLCDGLLSRELGKMLRKALSELEGVELSSVKSGVSLPAILIEREDRIRANHNPPKMRSLKVTLTRLLDVAISSLTGLKVSQEPDAILIFDFERGDVKLELAPVFIFGRYRKLQRGISQSRRKCPECGGRGCEACGWKGKIPQGSVEGIVGEVMREFFSAEDYVLHGAGREDVDARMLGEGRPFVMELLSPKRRSADLREVESEINRRAAGLIEVKNLEFSRREKIRILKERSPNVKKLYRALVEVEGGVEEGELELLKGLEGAVIRQRTPKRVLWRRADITRLKRVYEVNFRRIDDKKFELFVLCDGGLYVKELISGDDGRTSPSVTEILGKKSFCSELDVLEVMVE.

The Nucleophile role is filled by aspartate 197. Residues tyrosine 265 and tyrosine 336 each contribute to the substrate site.

The protein belongs to the pseudouridine synthase Pus10 family.

It carries out the reaction uridine(54) in tRNA = pseudouridine(54) in tRNA. The enzyme catalyses uridine(55) in tRNA = pseudouridine(55) in tRNA. In terms of biological role, responsible for synthesis of pseudouridine from uracil-54 and uracil-55 in the psi GC loop of transfer RNAs. The protein is tRNA pseudouridine synthase Pus10 of Korarchaeum cryptofilum (strain OPF8).